The chain runs to 354 residues: Uroporphyrinogen decarboxylase (354 aa).

Residues 27–31 (RQAGR), Asp77, Tyr154, Thr209, and His327 contribute to the substrate site.

It belongs to the uroporphyrinogen decarboxylase family. Homodimer.

It localises to the cytoplasm. It carries out the reaction uroporphyrinogen III + 4 H(+) = coproporphyrinogen III + 4 CO2. The protein operates within porphyrin-containing compound metabolism; protoporphyrin-IX biosynthesis; coproporphyrinogen-III from 5-aminolevulinate: step 4/4. Functionally, catalyzes the decarboxylation of four acetate groups of uroporphyrinogen-III to yield coproporphyrinogen-III. The polypeptide is Uroporphyrinogen decarboxylase (Escherichia coli O6:K15:H31 (strain 536 / UPEC)).